A 405-amino-acid polypeptide reads, in one-letter code: Indoleamine 2,3-dioxygenase 2 (405 aa).

H347 is a heme binding site.

Belongs to the indoleamine 2,3-dioxygenase family. The cofactor is heme. In terms of tissue distribution, expressed mainly in antigen-presenting immune cells, liver, kidney, brain, and placenta. Highly expressed in kidney, followed by epididymis and liver (at protein level). Detected in the tails of the spermatozoa in the testis and in the kidney tubules (at protein level). Constitutively expressed in brain.

It catalyses the reaction L-tryptophan + O2 = N-formyl-L-kynurenine. Its pathway is amino-acid degradation; L-tryptophan degradation via kynurenine pathway; L-kynurenine from L-tryptophan: step 1/2. Its activity is regulated as follows. Activity is inhibited by D-1MT (1-methyl-D-tryptophan) and MTH-trp (methylthiohydantoin-DL-tryptophan) but not L-1MT (1-methyl-L-tryptophan). Catalyzes the first and rate-limiting step in the kynurenine pathway of tryptophan catabolism. Involved in immune regulation. In Mus musculus (Mouse), this protein is Indoleamine 2,3-dioxygenase 2.